Here is a 506-residue protein sequence, read N- to C-terminus: GMP synthase [glutamine-hydrolyzing] (506 aa).

Residues 2 to 190 enclose the Glutamine amidotransferase type-1 domain; it reads SIVILDFGSQ…FLDICGVTRD (189 aa). Cysteine 79 acts as the Nucleophile in catalysis. Active-site residues include histidine 165 and glutamate 167. Positions 191–381 constitute a GMPS ATP-PPase domain; the sequence is WNAEHIVDEL…LGLPDHIRMR (191 aa). 219-225 provides a ligand contact to ATP; that stretch reads SGGVDSS.

As to quaternary structure, homodimer.

The catalysed reaction is XMP + L-glutamine + ATP + H2O = GMP + L-glutamate + AMP + diphosphate + 2 H(+). Its pathway is purine metabolism; GMP biosynthesis; GMP from XMP (L-Gln route): step 1/1. Its function is as follows. Catalyzes the synthesis of GMP from XMP. This is GMP synthase [glutamine-hydrolyzing] (guaA) from Deinococcus radiodurans (strain ATCC 13939 / DSM 20539 / JCM 16871 / CCUG 27074 / LMG 4051 / NBRC 15346 / NCIMB 9279 / VKM B-1422 / R1).